Consider the following 814-residue polypeptide: Rho GTPase-activating protein 26 (814 aa).

One can recognise a BAR domain in the interval 7–262 (EFSDCCLDSP…MKENPLEHKT (256 aa)). One can recognise a PH domain in the interval 265–369 (PYTMEGYLYV…WMEAMDGREP (105 aa)). In terms of domain architecture, Rho-GAP spans 383 to 568 (AQLDSIGFSI…ILIENHEKIF (186 aa)). Disordered stretches follow at residues 584-618 (SRKK…QRNS) and 638-696 (SSSL…SSDS). 2 stretches are compositionally biased toward low complexity: residues 591–600 (SKPPSCSKRP) and 638–661 (SSSL…SRPS). Residues 662–672 (SLPPNPSPTSP) are compositionally biased toward pro residues. S668 is subject to Phosphoserine. T670 bears the Phosphothreonine mark. Residue S671 is modified to Phosphoserine. The span at 673–696 (LSPSWPMFSAPSSPMPTSSTSSDS) shows a compositional bias: low complexity. The 59-residue stretch at 756–814 (TPFRKAKALYACQAEHDSELSFTAGTVFDNVHPSQEPGWLEGTLNGKTGLIPENYVEFL) folds into the SH3 domain.

As to quaternary structure, interacts with NYAP1, NYAP2 and MYO16. Interacts with MICAL1 and WDR44. Binds to the C-terminus of PTK2/FAK1. Post-translationally, phosphorylated in a PINK1-dependent fashion promoting retrograde mitochondrial trafficking and clustering.

It localises to the cell junction. It is found in the focal adhesion. The protein localises to the cytoplasm. The protein resides in the cytoskeleton. Its subcellular location is the endosome membrane. GTPase-activating protein for RHOA and CDC42. Facilitates mitochondrial quality control by promoting Parkin-mediated recruitment of autophagosomes to damaged mitochondria. Associates with MICAL1 on the endosomal membrane to promote Rab8-Rab10-dependent tubule extension. After dissociation of MICAL1, recruits WDR44 which connects the endoplasmic reticulum (ER) with the endosomal tubule, thereby participating in the export of a subset of neosynthesized proteins. In Mus musculus (Mouse), this protein is Rho GTPase-activating protein 26 (Arhgap26).